Consider the following 815-residue polypeptide: Cilia- and flagella-associated protein 251 (815 aa).

WD repeat units lie at residues 58-99, 103-148, 166-205, 218-257, 271-308, 379-418, 420-460, 463-502, 511-553, and 573-612; these read GHTS…PTRT, PHRH…TPPE, PAGD…PRFQ, QSVG…AQVG, IHNC…VAWF, SLLA…LLGG, AFER…DLYV, NTAA…HTMR, SHHG…VAAG, and SFAP…LERS.

As to quaternary structure, identified in a spoke-associated complex containing CFAP61, CFAP91 and CFAP251; the complex is associated with the radial spokes in the axoneme. The complex associates with Calmodulin; the association is calcium sensitive.

It is found in the cytoplasm. Its subcellular location is the cytoskeleton. It localises to the flagellum axoneme. Its function is as follows. As component of a spoke-associated complex, regulates flagellar dynein activity by mediating regulatory signals between the radial spokes and dynein arms. The polypeptide is Cilia- and flagella-associated protein 251 (Chlamydomonas reinhardtii (Chlamydomonas smithii)).